Reading from the N-terminus, the 120-residue chain is Large ribosomal subunit protein uL18 (120 aa).

Belongs to the universal ribosomal protein uL18 family. In terms of assembly, part of the 50S ribosomal subunit; part of the 5S rRNA/L5/L18/L25 subcomplex. Contacts the 5S and 23S rRNAs.

In terms of biological role, this is one of the proteins that bind and probably mediate the attachment of the 5S RNA into the large ribosomal subunit, where it forms part of the central protuberance. In Nitrobacter hamburgensis (strain DSM 10229 / NCIMB 13809 / X14), this protein is Large ribosomal subunit protein uL18.